We begin with the raw amino-acid sequence, 91 residues long: Small ribosomal subunit protein bS20 (91 aa).

The interval 72–91 (KNAASRQKSRLAKKLNGLSA) is disordered.

It belongs to the bacterial ribosomal protein bS20 family.

In terms of biological role, binds directly to 16S ribosomal RNA. This chain is Small ribosomal subunit protein bS20, found in Halalkalibacterium halodurans (strain ATCC BAA-125 / DSM 18197 / FERM 7344 / JCM 9153 / C-125) (Bacillus halodurans).